The primary structure comprises 840 residues: Phosphatidylglycerol lysyltransferase (840 aa).

At 1–8 (MTQELKSK) the chain is on the cytoplasmic side. The helical transmembrane segment at 9-29 (LLSFFKFIFATALFIFVIFTL) threads the bilayer. At 30–52 (YRELSHINFKETFIQFGKINRLW) the chain is on the extracellular side. A helical transmembrane segment spans residues 53 to 73 (LVLLFAGGGLSLILLSLYDII). Residues 74–89 (LVKALKLKMPLIRVFR) lie on the Cytoplasmic side of the membrane. A helical membrane pass occupies residues 90 to 110 (VSYIINALNSIIGFGGFIGAG). At 111–129 (VRAFVYKNYTNDTKKLVQY) the chain is on the extracellular side. Residues 130-150 (ISIILVSMLTGLSLLSILVVL) form a helical membrane-spanning segment. The Cytoplasmic portion of the chain corresponds to 151-161 (RIFNASHMIDE). The chain crosses the membrane as a helical span at residues 162 to 182 (ISWVRWILYIVALFLPIFIFY). The Extracellular segment spans residues 183–200 (TVARPVDRNNRYMGVYCT). A helical membrane pass occupies residues 201 to 221 (VVSCVEWMAAATVLYFAALIV). At 222–229 (DIHISFMT) the chain is on the cytoplasmic side. A helical membrane pass occupies residues 230 to 250 (FVGIFVIAALSGLVSFIPGGF). At 251-270 (GAFDLVVLLGLKSLGISEEK) the chain is on the extracellular side. Residues 271 to 291 (ILLALVLYRFAYYFVPVMIAL) traverse the membrane as a helical segment. The Cytoplasmic segment spans residues 292 to 337 (ILSSFEFGNTAKKYLDNSKYFIPVKDFTSFLRSYQKDILAKVPSFS). The chain crosses the membrane as a helical span at residues 338–358 (LAILIFLTSIIFFINNLTIVY). The Extracellular portion of the chain corresponds to 359-366 (DGLYDGNH). A helical membrane pass occupies residues 367–387 (FAYYIALAIQTSACLLLILNV). The Cytoplasmic portion of the chain corresponds to 388–392 (RGIYK). A helical membrane pass occupies residues 393 to 413 (GSRRAIIYAFISIILIASATI). Residues 414-415 (YT) lie on the Extracellular side of the membrane. A helical transmembrane segment spans residues 416–436 (YASFLLLSWLIIIFVLLILAY). At 437 to 450 (QRAQVLKRPLRFKK) the chain is on the cytoplasmic side. The helical transmembrane segment at 451-471 (LAFMLLLSIFILYLNHILISG) threads the bilayer. Residues 472–489 (TLYALDVYHIEIDTSLLR) lie on the Extracellular side of the membrane. A helical transmembrane segment spans residues 490 to 510 (YYFWMTIVIIMLLVGVIAWLF). Residues 511 to 840 (DYKYKRPHHS…LKVMRVIRHK (330 aa)) lie on the Cytoplasmic side of the membrane.

It belongs to the LPG synthase family.

It localises to the cell membrane. It carries out the reaction L-lysyl-tRNA(Lys) + a 1,2-diacyl-sn-glycero-3-phospho-(1'-sn-glycerol) = a 1,2-diacyl-sn-glycero-3-phospho-1'-(3'-O-L-lysyl)-sn-glycerol + tRNA(Lys). Catalyzes the transfer of a lysyl group from L-lysyl-tRNA(Lys) to membrane-bound phosphatidylglycerol (PG), which produces lysylphosphatidylglycerol (LPG), a major component of the bacterial membrane with a positive net charge. LPG synthesis contributes to bacterial virulence as it is involved in the resistance mechanism against cationic antimicrobial peptides (CAMP) produces by the host's immune system (defensins, cathelicidins) and by the competing microorganisms (bacteriocins). In fact, the modification of anionic phosphatidylglycerol with positively charged L-lysine results in repulsion of the peptides. This chain is Phosphatidylglycerol lysyltransferase (mprF), found in Staphylococcus epidermidis (strain ATCC 35984 / DSM 28319 / BCRC 17069 / CCUG 31568 / BM 3577 / RP62A).